Here is a 931-residue protein sequence, read N- to C-terminus: Myelin regulatory factor homolog 1 (931 aa).

Topologically, residues 1 to 658 (MSSSDLLKGE…SCGSRLSQGT (658 aa)) are cytoplasmic. Residues 29-143 (TDEDDGSMVS…QQHQQTRGGN (115 aa)) are disordered. Residues 37–52 (VSPTSSADSMHQNLGV) are compositionally biased toward polar residues. Positions 53–68 (QQQQQQMLQAQQRQNQ) are enriched in low complexity. Positions 117 to 126 (DNGNQTMNNI) are enriched in polar residues. A compositionally biased stretch (low complexity) spans 127-138 (QSQQLSQQQHQQ). Positions 169-436 (GTAAVNQPTN…TNPGSFEPQD (268 aa)) form a DNA-binding region, NDT80. The Peptidase S74 domain occupies 483–582 (SDIRLKEAIT…RMTGDLDSKI (100 aa)). A helical membrane pass occupies residues 659–679 (VVTLVSIMAACLLAMSALYVL). At 680 to 931 (DWHNRNYGYH…FYRMCTLSSS (252 aa)) the chain is on the lumenal side. 2 N-linked (GlcNAc...) asparagine glycosylation sites follow: Asn-797 and Asn-912.

This sequence belongs to the MRF family. Homotrimer. Interacts with myrf-2. Interacts (via C-terminus) with pan-1 (via LRR regions); the interaction promotes the role of myrf-1 in the synaptic remodeling of DD GABAergic motor neurons at the cell membrane. Post-translationally, myelin regulatory factor: Follows autocatalytic cleavage via the peptidase S74 domain. Autoprocessing is apparently constitutive and is essential for transcriptional activity. Widely expressed in many tissues, including neuronal, muscle and epidermal stem cells. In neurons, expressed in dorsal D (DD) GABAergic motor neurons.

The protein localises to the endoplasmic reticulum membrane. Its subcellular location is the nucleus. It is found in the apical cell membrane. It localises to the cytoplasm. Constitutes a precursor of the transcription factor. Mediates the autocatalytic cleavage that releases the Myelin regulatory factor homolog 1, N-terminal component that specifically activates transcription of genes involved in synaptic rewiring during nervous system maturation. Functionally, membrane-bound part that has no transcription factor activity and remains attached to the endoplasmic reticulum membrane following cleavage. Its function is as follows. Transcription factor that specifically activates expression of genes involved in synaptic rewiring during nervous system maturation. Specifically required for dorsal D (DD) GABAergic motor neurons synaptic rewiring. Acts in complex with myrf-2 paralog. This is Myelin regulatory factor homolog 1 from Caenorhabditis elegans.